We begin with the raw amino-acid sequence, 25 residues long: Ribosome-inactivating protein velutin (25 aa).

Positions 1–25 (XHPDLFXXRPDNTASPKFEDPRLNP) are disordered.

Belongs to the ribosome-inactivating protein family.

It catalyses the reaction Endohydrolysis of the N-glycosidic bond at one specific adenosine on the 28S rRNA.. In terms of biological role, inhibits protein synthesis but does not possess ribonuclease activity. Also inhibits HIV-1 reverse transcriptase, beta-glucosidase and beta-glucuronidase. This Flammulina velutipes (Agaricus velutipes) protein is Ribosome-inactivating protein velutin.